Reading from the N-terminus, the 120-residue chain is uncharacterized protein (120 aa).

This is an uncharacterized protein from Dictyostelium discoideum (Social amoeba).